Consider the following 209-residue polypeptide: ATP phosphoribosyltransferase (209 aa).

This sequence belongs to the ATP phosphoribosyltransferase family. Short subfamily. In terms of assembly, heteromultimer composed of HisG and HisZ subunits.

The protein resides in the cytoplasm. The enzyme catalyses 1-(5-phospho-beta-D-ribosyl)-ATP + diphosphate = 5-phospho-alpha-D-ribose 1-diphosphate + ATP. It functions in the pathway amino-acid biosynthesis; L-histidine biosynthesis; L-histidine from 5-phospho-alpha-D-ribose 1-diphosphate: step 1/9. Its function is as follows. Catalyzes the condensation of ATP and 5-phosphoribose 1-diphosphate to form N'-(5'-phosphoribosyl)-ATP (PR-ATP). Has a crucial role in the pathway because the rate of histidine biosynthesis seems to be controlled primarily by regulation of HisG enzymatic activity. The polypeptide is ATP phosphoribosyltransferase (Sulfurimonas denitrificans (strain ATCC 33889 / DSM 1251) (Thiomicrospira denitrificans (strain ATCC 33889 / DSM 1251))).